Consider the following 1073-residue polypeptide: Error-prone DNA polymerase (1073 aa).

The segment at 41 to 73 (EAEPECLSTPRPGPGSTEVPGERRGSRQGERSG) is disordered. The segment covering 60 to 73 (PGERRGSRQGERSG) has biased composition (basic and acidic residues).

It belongs to the DNA polymerase type-C family. DnaE2 subfamily.

The protein resides in the cytoplasm. The catalysed reaction is DNA(n) + a 2'-deoxyribonucleoside 5'-triphosphate = DNA(n+1) + diphosphate. In terms of biological role, DNA polymerase involved in damage-induced mutagenesis and translesion synthesis (TLS). It is not the major replicative DNA polymerase. In Corynebacterium efficiens (strain DSM 44549 / YS-314 / AJ 12310 / JCM 11189 / NBRC 100395), this protein is Error-prone DNA polymerase.